Reading from the N-terminus, the 389-residue chain is Chromobox protein homolog 8 (389 aa).

The region spanning 11–69 is the Chromo domain; sequence FAAEALLKRRIRKGRMEYLVKWKGWSQKYSTWEPEENILDARLLAAFEEREREMELYGP. Residues S110 and S130 each carry the phosphoserine modification. The disordered stretch occupies residues 124–241; it reads LRNMGLSPPA…DDTPSGAGKF (118 aa). A compositionally biased stretch (basic and acidic residues) spans 145 to 189; sequence EAPRDRDRDRDRDRERDRERERERERERERERERERGTSRVDDKP. Residues S191, S256, S265, S311, S332, and S352 each carry the phosphoserine modification. A disordered region spans residues 298–327; it reads GALDPNGTRVRHGSGPPSSGGGLYRDMGAQ.

In terms of assembly, component of a PRC1-like complex. Interacts with RING1 RNF2, PCGF1, PCGF2, PCGF3, BMI1, PCGF5 and PCGF6. Interacts with MLLT3 and histone H3. Interacts with PHC2.

It localises to the nucleus. Functionally, component of a Polycomb group (PcG) multiprotein PRC1-like complex, a complex class required to maintain the transcriptionally repressive state of many genes, including Hox genes, throughout development. PcG PRC1 complex acts via chromatin remodeling and modification of histones; it mediates monoubiquitination of histone H2A 'Lys-119', rendering chromatin heritably changed in its expressibility. The chain is Chromobox protein homolog 8 (CBX8) from Homo sapiens (Human).